We begin with the raw amino-acid sequence, 493 residues long: Glycerol kinase (493 aa).

T13 contacts ADP. T13, T14, and S15 together coordinate ATP. Residue T13 coordinates sn-glycerol 3-phosphate. R17 is a binding site for ADP. 4 residues coordinate sn-glycerol 3-phosphate: R83, E84, Y135, and D244. The glycerol site is built by R83, E84, Y135, D244, and Q245. Positions 266 and 309 each coordinate ADP. 4 residues coordinate ATP: T266, G309, Q313, and G410. 2 residues coordinate ADP: G410 and N414.

This sequence belongs to the FGGY kinase family.

The enzyme catalyses glycerol + ATP = sn-glycerol 3-phosphate + ADP + H(+). It participates in polyol metabolism; glycerol degradation via glycerol kinase pathway; sn-glycerol 3-phosphate from glycerol: step 1/1. With respect to regulation, inhibited by fructose 1,6-bisphosphate (FBP). Its function is as follows. Key enzyme in the regulation of glycerol uptake and metabolism. Catalyzes the phosphorylation of glycerol to yield sn-glycerol 3-phosphate. This is Glycerol kinase from Shewanella halifaxensis (strain HAW-EB4).